The sequence spans 238 residues: Thrombin-like enzyme halystase (238 aa).

The 229-residue stretch at 1-229 (IIGGDECNIN…HLDWIKSIIA (229 aa)) folds into the Peptidase S1 domain. Disulfide bonds link Cys-7/Cys-141, Cys-28/Cys-44, Cys-76/Cys-236, Cys-120/Cys-190, Cys-152/Cys-169, and Cys-180/Cys-205. The active-site Charge relay system is the His-43. An N-linked (GlcNAc...) asparagine glycan is attached at Asn-81. Asp-88 acts as the Charge relay system in catalysis. An N-linked (GlcNAc...) asparagine glycan is attached at Asn-100. Ser-184 serves as the catalytic Charge relay system.

The protein belongs to the peptidase S1 family. Snake venom subfamily. As to quaternary structure, monomer. Expressed by the venom gland.

The protein resides in the secreted. Inhibited by diisopropylfluorophosphate (DFP), PMSF and leupeptin. Functionally, thrombin-like snake venom serine protease. Cleaves fibrinogen (beta chain of fibrinogen (FGB) and more slowly alpha chain (FGA)) without inducing fibrin clotting and cleaves kininogen to produce bradykinin (KNG), resulting in the reduction of blood pressure. The sequence is that of Thrombin-like enzyme halystase from Gloydius blomhoffii (Mamushi).